A 671-amino-acid polypeptide reads, in one-letter code: Carbohydrate acetyl esterase/feruloyl esterase (671 aa).

The first 24 residues, 1–24 (MYQSTLKTILLASALLILPASMSA), serve as a signal peptide directing secretion. The interval 1 to 296 (MYQSTLKTIL…YGEAVARHLG (296 aa)) is carbohydrate acetyl esterase. Catalysis depends on for acetyl esterase activity residues S55, D271, and H274. A feruloyl esterase region spans residues 297–671 (YEPKRPYIEM…NEFIPHLFKK (375 aa)).

It in the N-terminal section; belongs to the carbohydrate esterase 6 family.

It catalyses the reaction feruloyl-polysaccharide + H2O = ferulate + polysaccharide.. Its pathway is glycan degradation; xylan degradation. Its function is as follows. Involved in degradation of plant cell wall polysaccharides. Bifunctional esterase that possesses both acetyl esterase and ferulic acid esterase activities. Has deacetylase activity towards acetylated xylo-oligosaccharides smaller than xylo-heptaose, as well as from glucose-pentaacetate. Is also able to release ferulic acid from methylferulate, and from the more natural substrates wheat bran, corn fiber, and XOS(FA,Ac), a corn fiber-derived substrate enriched in O-acetyl and ferulic acid esters. The sequence is that of Carbohydrate acetyl esterase/feruloyl esterase from Xylanibacter ruminicola (strain ATCC 19189 / DSM 19721 / CIP 105475 / JCM 8958 / 23) (Prevotella ruminicola).